The chain runs to 226 residues: UPF0758 protein CHY_0341 (226 aa).

An MPN domain is found at 104–226 (NFLNPDDVYN…YISMKAERLF (123 aa)). Residues His175, His177, and Asp188 each contribute to the Zn(2+) site. Residues 175-188 (HNHPSGDPTPSKED) carry the JAMM motif motif.

Belongs to the UPF0758 family.

This Carboxydothermus hydrogenoformans (strain ATCC BAA-161 / DSM 6008 / Z-2901) protein is UPF0758 protein CHY_0341.